A 178-amino-acid polypeptide reads, in one-letter code: Translation initiation factor IF-3 (178 aa).

The protein belongs to the IF-3 family. Monomer.

It localises to the cytoplasm. Its function is as follows. IF-3 binds to the 30S ribosomal subunit and shifts the equilibrium between 70S ribosomes and their 50S and 30S subunits in favor of the free subunits, thus enhancing the availability of 30S subunits on which protein synthesis initiation begins. In Legionella pneumophila (strain Paris), this protein is Translation initiation factor IF-3.